Consider the following 68-residue polypeptide: MASLKKSLFLVLFLGFVSLSICEEEKREDKEDEGENEEAEENHEERSEEKRFLPLLASLVGGLLGKRS.

The signal sequence occupies residues 1 to 22; it reads MASLKKSLFLVLFLGFVSLSIC. The propeptide occupies 23–51; it reads EEEKREDKEDEGENEEAEENHEERSEEKR. Residues 24–50 are disordered; that stretch reads EEKREDKEDEGENEEAEENHEERSEEK. Residues 30-42 are compositionally biased toward acidic residues; the sequence is KEDEGENEEAEEN. L64 is modified (leucine amide). Residue S68 is a propeptide.

Belongs to the frog skin active peptide (FSAP) family. Brevinin subfamily. Expressed by the skin glands.

The protein localises to the secreted. This chain is Preprofallaxidin-5, found in Litoria fallax (Eastern dwarf tree frog).